The following is a 374-amino-acid chain: Retron Eco8 reverse transcriptase (374 aa).

The Reverse transcriptase domain maps to 25–252 (ENIITQSAIP…KEISINGYVI (228 aa)). Asp107, Asp200, and Asp201 together coordinate Mg(2+).

Belongs to the bacterial reverse transcriptase family.

The enzyme catalyses DNA(n) + a 2'-deoxyribonucleoside 5'-triphosphate = DNA(n+1) + diphosphate. Functionally, reverse transcriptase (RT) component of antiviral defense system retron Eco8, composed of this RT, the following endonuclease and a non-coding RNA (ncRNA) encoded between them. Expression of retron Eco8 confers protection against bacteriophages T4, T6, T7 and SECphi4, SECphi6 and SECphi18. At multiplicity of infection (MOI) of 0.02 cultures slow growth when infected with SECphi4 but do not collapse, at MOI 2 cultures collapse. Responsible for synthesis of msDNA (a branched molecule with RNA linked by a 2',5'-phosphodiester bond to ssDNA). The retron transcript serves as primer (from a conserved internal G residue) and template for the reaction, and codes for the RT. The protein is Retron Eco8 reverse transcriptase of Escherichia coli.